The sequence spans 668 residues: MKHYAIQPANLEFNAEGTPVSRDFDDVYFSNDNGLEETRYVFLGGNQLEARFPEHPHPLFVVAESGFGTGLNFLTLWQAFDQFREAHPQAQLQRLHFISFEKFPLARADLALAHHHWPELAPWAEQLQAQWPMPLPGCHRLLFDEGHVTLDLWFGDINELTSQLDDSLNQKVDAWFLDGFAPAKNPDMWTQNLFKAMARLARPGGTLATFTSAGFVRRGLQEAGFSMQKRKGFGRKREMLCGVMEQTLPLPCSTPWFNRTGSNKQEAAIIGGGIASALLSLALLRRGWQVTLYCADEAPALGASGNRQGALYPLLSKHDEALNRFFSNAFTFARRFYDQLPVKFDHDWCGVTQLGWDEKSQHKIAQMLSMDLPAELAVAVEANAVEQITGVATNCSGITYPEGGWLCPAELTRNVLELAQQQGLQIRYQHQLQDLSRKDDGWLLNFAGDQQATHSVVVLANGHQISRFSQTSSLPVYSVAGQVSHIPTTPELAKLKQVLCYDGYLTPQNPANQHHCIGASYHRGSEDTAYSEDDQQQNRQRLIDCFPQAQWAKAVDVSDKEARCGVRCATRDHLPMVGNVPDYDATLVEYASLAEKKDEAVSAPVYDDLFMFAALGSRGLCSAPLCAEILAAQMSEEPIPMDASTLAALNPNRLWVRKLLKGKAVKAG.

The tRNA (mnm(5)s(2)U34)-methyltransferase stretch occupies residues 1 to 245 (MKHYAIQPAN…KREMLCGVME (245 aa)). The segment at 270-668 (IGGGIASALL…LLKGKAVKAG (399 aa)) is FAD-dependent cmnm(5)s(2)U34 oxidoreductase.

The protein in the N-terminal section; belongs to the methyltransferase superfamily. tRNA (mnm(5)s(2)U34)-methyltransferase family. In the C-terminal section; belongs to the DAO family. Requires FAD as cofactor.

Its subcellular location is the cytoplasm. The enzyme catalyses 5-aminomethyl-2-thiouridine(34) in tRNA + S-adenosyl-L-methionine = 5-methylaminomethyl-2-thiouridine(34) in tRNA + S-adenosyl-L-homocysteine + H(+). Catalyzes the last two steps in the biosynthesis of 5-methylaminomethyl-2-thiouridine (mnm(5)s(2)U) at the wobble position (U34) in tRNA. Catalyzes the FAD-dependent demodification of cmnm(5)s(2)U34 to nm(5)s(2)U34, followed by the transfer of a methyl group from S-adenosyl-L-methionine to nm(5)s(2)U34, to form mnm(5)s(2)U34. The protein is tRNA 5-methylaminomethyl-2-thiouridine biosynthesis bifunctional protein MnmC of Escherichia coli (strain SMS-3-5 / SECEC).